The chain runs to 29 residues: Brevinin-2Rd (29 aa).

An intrachain disulfide couples cysteine 23 to cysteine 29.

Expressed by the skin glands.

It is found in the secreted. In terms of biological role, antimicrobial peptide. The sequence is that of Brevinin-2Rd from Pelophylax ridibundus (Marsh frog).